A 561-amino-acid chain; its full sequence is MNINVAELLNGNYILLLFVVLTLGLCLGKLRLGSIQLGNSIGVLVVSLLLGQQHFSINTDALNLGFMLFIFCVGVEAGPNFFSIFFRDGKNYLMLALVMVGSALVIALGLGKLFGWDIGLTAGMLAGSMTSTPVLVGAGDTLRHSGMESRQLSLALDNLSLGYALTYLIGLVSLIVGARYLPKLQHQDLQTSAQQIARERGLDTDANRKVYLPVIRAYRVGPELVAWTDGKNLRELGIYRQTGCYIERIRRNGILANPDGDAVLQMGDEIALVGYPDAHARLDPSFRNGKEVFDRDLLDMRIVTEEVVVKNHNAVGKRLAQLKLTDHGCFLNRVIRSQIEMPIDDNVVLNKGDVLQVSGDARRVKTIADRIGFISIHSQVTDLLAFCAFFVIGLMIGMITFQFSTFSFGMGNAAGLLFAGIMLGFMRANHPTFGYIPQGALSMVKEFGLMVFMAGVGLSAGSGINNGLGAIGGQMLIAGLIVSLVPVVICFLFGAYVLRMNRALLFGAMMGARTCAPAMEIISDTARSNIPALGYAGTYAIANVLLTLAGTIIVMVWPGLG.

Helical transmembrane passes span 8 to 28 (LLNG…LCLG), 32 to 52 (LGSI…LLGQ), 66 to 86 (FMLF…SIFF), 94 to 114 (MLAL…GKLF), and 158 to 178 (NLSL…IVGA). RCK C-terminal domains follow at residues 200 to 288 (RGLD…SFRN) and 292 to 373 (VFDR…RIGF). 5 helical membrane-spanning segments follow: residues 383–403 (LLAF…TFQF), 406–426 (FSFG…LGFM), 451–471 (VFMA…LGAI), 475–495 (MLIA…LFGA), and 540–560 (AIAN…WPGL).

This sequence belongs to the AAE transporter (TC 2.A.81) family. YbjL subfamily.

It localises to the cell membrane. In Shigella sonnei (strain Ss046), this protein is Putative transport protein YbjL.